The sequence spans 725 residues: ATP-dependent zinc metalloprotease FtsH (725 aa).

At 1–11 (MDKMKKPKINW) the chain is on the cytoplasmic side. Residues 12–32 (LLIVIVGIIAALLITVLVLLF) form a helical membrane-spanning segment. Over 33–160 (SPKTQPKSFD…LFGQHIVQEN (128 aa)) the chain is Extracellular. The helical transmembrane segment at 161–181 (GFITFIKAIWFPALIAIIIFL) threads the bilayer. The Cytoplasmic portion of the chain corresponds to 182-725 (GYKAQSRAAS…EEETLAEKAE (544 aa)). 252-259 (GPPGTGKT) is a binding site for ATP. Histidine 474 is a binding site for Zn(2+). Residue glutamate 475 is part of the active site. Histidine 478 and aspartate 552 together coordinate Zn(2+). Residues 680 to 725 (QVNESQEKDKQKNAQIKEDLSKMDKKDNLTKAKDKGEEETLAEKAE) form a disordered region. Residues 684–725 (SQEKDKQKNAQIKEDLSKMDKKDNLTKAKDKGEEETLAEKAE) are compositionally biased toward basic and acidic residues.

The protein in the central section; belongs to the AAA ATPase family. It in the C-terminal section; belongs to the peptidase M41 family. In terms of assembly, homohexamer. Zn(2+) is required as a cofactor.

The protein resides in the cell membrane. Functionally, acts as a processive, ATP-dependent zinc metallopeptidase for both cytoplasmic and membrane proteins. Plays a role in the quality control of integral membrane proteins. The polypeptide is ATP-dependent zinc metalloprotease FtsH (Mycoplasmopsis pulmonis (strain UAB CTIP) (Mycoplasma pulmonis)).